The primary structure comprises 314 residues: Citrate/oxoglutarate carrier protein (314 aa).

Solcar repeat units lie at residues 18-100 (VSFS…EAEY), 107-199 (LNNF…VEDG), and 217-301 (EKIG…AKEF). The next 5 helical transmembrane spans lie at 23 to 44 (ILLG…LEVV), 77 to 97 (IPWA…VSAE), 111 to 127 (ASGI…QAYL), 178 to 198 (VAIR…LVED), and 218 to 238 (KIGA…IEVI). The DNA-binding element occupies 246 to 259 (KEDPNRPKNLTVGK). A helical transmembrane segment spans residues 273 to 294 (LYRGVTPRIGLGIWQTVFMVGF).

It belongs to the mitochondrial carrier (TC 2.A.29) family.

Its subcellular location is the mitochondrion inner membrane. The protein localises to the mitochondrion matrix. It is found in the mitochondrion nucleoid. With respect to regulation, strongly inhibited by mersalyl, p-chloromercuribenzenesulfonate, mercuric chloride, N-ethylmaleimide, pyridoxal 5'-phosphate, bathophenanthroline, and tannic acid. Partially inhibited by alpha-cyanocinnamate and bromescol purple. Weakly inhibited by butylmalonate and phenylsuccinate. Not inhibited by 1,2,3-benzenetricarboxylate or carboxyatractyloside. Mitochondrial antiporter which catalyzes the transport of citrate and oxoglutarate across the membrane. Also shows specificity for oxaloacetate, and to a lesser extent succinate and fumarate. Transports isocitrate, cis-aconitate and L-malate with very low efficiency. Does not show uniporter activity. Helps to maintain normal citrate levels and NADPH/NADP(+) ratios under conditions of oxidative stress. In addition, associates with the mitochondrial nucleoid and binds DNA in vitro, although the relevance of these data in vivo is unclear. The sequence is that of Citrate/oxoglutarate carrier protein (YHM2) from Saccharomyces cerevisiae (strain ATCC 204508 / S288c) (Baker's yeast).